The chain runs to 101 residues: Small ribosomal subunit protein uS14 (101 aa).

The segment at 32–62 (GDAKRSDAEREAARLGLQKLPRNANPTRQRN) is disordered. Over residues 33–44 (DAKRSDAEREAA) the composition is skewed to basic and acidic residues.

The protein belongs to the universal ribosomal protein uS14 family. Part of the 30S ribosomal subunit. Contacts proteins S3 and S10.

Binds 16S rRNA, required for the assembly of 30S particles and may also be responsible for determining the conformation of the 16S rRNA at the A site. This chain is Small ribosomal subunit protein uS14, found in Verminephrobacter eiseniae (strain EF01-2).